A 140-amino-acid chain; its full sequence is Nucleoside diphosphate kinase (140 aa).

Lys-11, Phe-59, Arg-87, Thr-93, Arg-104, and Asn-114 together coordinate ATP. Catalysis depends on His-117, which acts as the Pros-phosphohistidine intermediate.

The protein belongs to the NDK family. As to quaternary structure, homotetramer. Mg(2+) is required as a cofactor.

The protein resides in the cytoplasm. The catalysed reaction is a 2'-deoxyribonucleoside 5'-diphosphate + ATP = a 2'-deoxyribonucleoside 5'-triphosphate + ADP. The enzyme catalyses a ribonucleoside 5'-diphosphate + ATP = a ribonucleoside 5'-triphosphate + ADP. Functionally, major role in the synthesis of nucleoside triphosphates other than ATP. The ATP gamma phosphate is transferred to the NDP beta phosphate via a ping-pong mechanism, using a phosphorylated active-site intermediate. This chain is Nucleoside diphosphate kinase, found in Francisella tularensis subsp. tularensis (strain SCHU S4 / Schu 4).